We begin with the raw amino-acid sequence, 160 residues long: Large ribosomal subunit protein uL11 (160 aa).

The protein belongs to the universal ribosomal protein uL11 family. In terms of assembly, part of the ribosomal stalk of the 50S ribosomal subunit. Interacts with L10 and the large rRNA to form the base of the stalk. L10 forms an elongated spine to which L12 dimers bind in a sequential fashion forming a multimeric L10(L12)X complex.

Forms part of the ribosomal stalk which helps the ribosome interact with GTP-bound translation factors. This is Large ribosomal subunit protein uL11 from Nanoarchaeum equitans (strain Kin4-M).